Consider the following 350-residue polypeptide: S-adenosylmethionine:tRNA ribosyltransferase-isomerase (350 aa).

Belongs to the QueA family. As to quaternary structure, monomer.

Its subcellular location is the cytoplasm. It carries out the reaction 7-aminomethyl-7-carbaguanosine(34) in tRNA + S-adenosyl-L-methionine = epoxyqueuosine(34) in tRNA + adenine + L-methionine + 2 H(+). It participates in tRNA modification; tRNA-queuosine biosynthesis. Transfers and isomerizes the ribose moiety from AdoMet to the 7-aminomethyl group of 7-deazaguanine (preQ1-tRNA) to give epoxyqueuosine (oQ-tRNA). The protein is S-adenosylmethionine:tRNA ribosyltransferase-isomerase of Aliivibrio fischeri (strain ATCC 700601 / ES114) (Vibrio fischeri).